We begin with the raw amino-acid sequence, 72 residues long: Translation initiation factor IF-1 (72 aa).

The 72-residue stretch at 1–72 (MAKEGAIEVE…TRGRIVYRYK (72 aa)) folds into the S1-like domain.

It belongs to the IF-1 family. Component of the 30S ribosomal translation pre-initiation complex which assembles on the 30S ribosome in the order IF-2 and IF-3, IF-1 and N-formylmethionyl-tRNA(fMet); mRNA recruitment can occur at any time during PIC assembly.

Its subcellular location is the cytoplasm. In terms of biological role, one of the essential components for the initiation of protein synthesis. Stabilizes the binding of IF-2 and IF-3 on the 30S subunit to which N-formylmethionyl-tRNA(fMet) subsequently binds. Helps modulate mRNA selection, yielding the 30S pre-initiation complex (PIC). Upon addition of the 50S ribosomal subunit IF-1, IF-2 and IF-3 are released leaving the mature 70S translation initiation complex. The sequence is that of Translation initiation factor IF-1 from Corynebacterium efficiens (strain DSM 44549 / YS-314 / AJ 12310 / JCM 11189 / NBRC 100395).